The chain runs to 130 residues: Small ribosomal subunit protein uS8 (130 aa).

The protein belongs to the universal ribosomal protein uS8 family. As to quaternary structure, part of the 30S ribosomal subunit. Contacts proteins S5 and S12.

Functionally, one of the primary rRNA binding proteins, it binds directly to 16S rRNA central domain where it helps coordinate assembly of the platform of the 30S subunit. The chain is Small ribosomal subunit protein uS8 from Phytoplasma mali (strain AT).